Consider the following 1406-residue polypeptide: DNA-directed RNA polymerase subunit beta' (1406 aa).

Zn(2+) contacts are provided by Cys-70, Cys-72, Cys-85, and Cys-88. The Mg(2+) site is built by Asp-460, Asp-462, and Asp-464. 4 residues coordinate Zn(2+): Cys-814, Cys-888, Cys-895, and Cys-898.

This sequence belongs to the RNA polymerase beta' chain family. As to quaternary structure, the RNAP catalytic core consists of 2 alpha, 1 beta, 1 beta' and 1 omega subunit. When a sigma factor is associated with the core the holoenzyme is formed, which can initiate transcription. Mg(2+) serves as cofactor. Zn(2+) is required as a cofactor.

The enzyme catalyses RNA(n) + a ribonucleoside 5'-triphosphate = RNA(n+1) + diphosphate. Its function is as follows. DNA-dependent RNA polymerase catalyzes the transcription of DNA into RNA using the four ribonucleoside triphosphates as substrates. This chain is DNA-directed RNA polymerase subunit beta', found in Yersinia enterocolitica serotype O:8 / biotype 1B (strain NCTC 13174 / 8081).